The chain runs to 985 residues: Phosphoenolpyruvate carboxylase (985 aa).

The segment covering 1–17 (MTQSAARRASSRATPAR) has biased composition (low complexity). The disordered stretch occupies residues 1–55 (MTQSAARRASSRATPARKTPPAPASQTPAPSPGGTAGTALGPTSRRSSGSAAAKD). Active-site residues include His193 and Lys634.

Belongs to the PEPCase type 1 family. Mg(2+) serves as cofactor.

It carries out the reaction oxaloacetate + phosphate = phosphoenolpyruvate + hydrogencarbonate. Functionally, forms oxaloacetate, a four-carbon dicarboxylic acid source for the tricarboxylic acid cycle. The polypeptide is Phosphoenolpyruvate carboxylase (Ralstonia nicotianae (strain ATCC BAA-1114 / GMI1000) (Ralstonia solanacearum)).